The primary structure comprises 153 residues: Putative pre-16S rRNA nuclease (153 aa).

It belongs to the YqgF nuclease family.

Its subcellular location is the cytoplasm. Could be a nuclease involved in processing of the 5'-end of pre-16S rRNA. This Prochlorococcus marinus (strain MIT 9301) protein is Putative pre-16S rRNA nuclease.